We begin with the raw amino-acid sequence, 90 residues long: Mitochondrial import inner membrane translocase subunit Tim9 (90 aa).

Residues 24–48 (CFNSCVNEFGSRTVSGKEESCANNC) carry the Twin CX3C motif motif. 2 cysteine pairs are disulfide-bonded: cysteine 24–cysteine 48 and cysteine 28–cysteine 44.

Belongs to the small Tim family. Heterohexamer; composed of 3 copies of tim-9/tin-9.1 and 3 copies of tim-10/tin-10, named soluble 70 kDa complex. The complex associates with the tim-22 component of the TIM22 complex. Interacts with multi-pass transmembrane proteins in transit.

The protein resides in the mitochondrion inner membrane. Functionally, mitochondrial intermembrane chaperone that participates in the import and insertion of multi-pass transmembrane proteins into the mitochondrial inner membrane. May also be required for the transfer of beta-barrel precursors from the TOM complex to the sorting and assembly machinery (SAM complex) of the outer membrane. Acts as a chaperone-like protein that protects the hydrophobic precursors from aggregation and guide them through the mitochondrial intermembrane space. The sequence is that of Mitochondrial import inner membrane translocase subunit Tim9 (tin-9.1) from Caenorhabditis elegans.